The following is a 127-amino-acid chain: Small ribosomal subunit protein uS13 (127 aa).

The interval 100-127 (GQRTRTNARTRKGVRKTVAGKKKAPAKK) is disordered. Over residues 101-127 (QRTRTNARTRKGVRKTVAGKKKAPAKK) the composition is skewed to basic residues.

The protein belongs to the universal ribosomal protein uS13 family. In terms of assembly, part of the 30S ribosomal subunit. Forms a loose heterodimer with protein S19. Forms two bridges to the 50S subunit in the 70S ribosome.

Its function is as follows. Located at the top of the head of the 30S subunit, it contacts several helices of the 16S rRNA. In the 70S ribosome it contacts the 23S rRNA (bridge B1a) and protein L5 of the 50S subunit (bridge B1b), connecting the 2 subunits; these bridges are implicated in subunit movement. Contacts the tRNAs in the A and P-sites. This Synechococcus sp. (strain JA-3-3Ab) (Cyanobacteria bacterium Yellowstone A-Prime) protein is Small ribosomal subunit protein uS13.